Consider the following 403-residue polypeptide: Basic leucine zipper 25 (403 aa).

2 disordered regions span residues 13–128 and 156–259; these read SFWP…APVV and VKPE…EFDT. Over residues 24 to 33 the composition is skewed to low complexity; sequence PGSSSTPSPT. Residues 56-69 show a composition bias toward polar residues; that stretch reads LSGSDSSPTTNTIE. Composition is skewed to low complexity over residues 115 to 128 and 161 to 174; these read APSS…APVV and SSAS…AQGS. Residues 175 to 195 are compositionally biased toward polar residues; sequence IVAQTSPGASSVRFSPTTSTQ. The segment covering 212 to 226 has biased composition (acidic residues); the sequence is DSDDDDLDGDADNGD. S213 carries the post-translational modification Phosphoserine. Residues 229-292 enclose the bZIP domain; sequence DVKRARRMLS…DAAAVDNRIL (64 aa). The basic motif stretch occupies residues 231–250; it reads KRARRMLSNRESARRSRRRK. The short motif at 233–240 is the Nuclear localization signal element; it reads ARRMLSNR. Positions 264-271 are leucine-zipper; it reads LRAEHSTL. Positions 332–345 are enriched in low complexity; that stretch reads NTPSASSSIPPNSN. Disordered stretches follow at residues 332-361 and 380-403; these read NTPS…SAGL and EGMQ…NHKH. The segment covering 351–361 has biased composition (polar residues); sequence ANSSTNTSAGL.

The protein belongs to the bZIP family. Homodimer. Forms a heterodimer with BZIP1, BZIP1, BZIP2, BZIP9, BZIP11, BZIP44, BZIP53 and BZIP63. Interacts with ABI3 and forms a complex made of ABI3, BZIP53 and BZIP25. As to expression, expressed in roots, shoots, stems, leaves, stipulae, siliques, seeds, pollen, and flowers.

It is found in the nucleus. Transcription factor that binds to the 5'-ACGT-3' box, especially present in G-box-like motif (5'-CCACGTGGCC-3'), ABRE elements, of seed storage protein (SSP) encoding gene promoters (e.g. At2S and CRU3) and promotes their expression in seeds when in complex with ABI3 and BZIP53. This chain is Basic leucine zipper 25 (BZIP25), found in Arabidopsis thaliana (Mouse-ear cress).